Here is a 512-residue protein sequence, read N- to C-terminus: Mannose-1-phosphate guanylyltransferase (512 aa).

Belongs to the mannose-6-phosphate isomerase type 2 family.

It catalyses the reaction alpha-D-mannose 1-phosphate + GTP + H(+) = GDP-alpha-D-mannose + diphosphate. This Sinorhizobium fredii (strain NBRC 101917 / NGR234) protein is Mannose-1-phosphate guanylyltransferase (noeJ).